A 318-amino-acid polypeptide reads, in one-letter code: Transaldolase (318 aa).

K132 serves as the catalytic Schiff-base intermediate with substrate.

This sequence belongs to the transaldolase family. Type 1 subfamily. As to quaternary structure, homodimer.

It is found in the cytoplasm. The enzyme catalyses D-sedoheptulose 7-phosphate + D-glyceraldehyde 3-phosphate = D-erythrose 4-phosphate + beta-D-fructose 6-phosphate. The protein operates within carbohydrate degradation; pentose phosphate pathway; D-glyceraldehyde 3-phosphate and beta-D-fructose 6-phosphate from D-ribose 5-phosphate and D-xylulose 5-phosphate (non-oxidative stage): step 2/3. Functionally, transaldolase is important for the balance of metabolites in the pentose-phosphate pathway. In Shewanella sp. (strain ANA-3), this protein is Transaldolase.